The chain runs to 916 residues: Translation initiation factor IF-2 (916 aa).

A compositionally biased stretch (basic and acidic residues) spans 151–191 (NLDEQQRLAESDRARDEAIQRKRDEEQAAKDRVEAERKAAE). Disordered stretches follow at residues 151-262 (NLDE…SHVM) and 280-328 (HLSA…ERPT). Composition is skewed to low complexity over residues 192 to 243 (EAAA…ATPA) and 293 to 305 (RGKP…SSSS). Positions 415 to 584 (SRPPVVTIMG…SLQAEVLELK (170 aa)) constitute a tr-type G domain. Residues 424-431 (GHVDHGKT) form a G1 region. 424–431 (GHVDHGKT) is a GTP binding site. Residues 449-453 (GITQH) are G2. A G3 region spans residues 470–473 (DTPG). Residues 470 to 474 (DTPGH) and 524 to 527 (NKID) each bind GTP. The tract at residues 524–527 (NKID) is G4. The interval 560 to 562 (SAK) is G5.

It belongs to the TRAFAC class translation factor GTPase superfamily. Classic translation factor GTPase family. IF-2 subfamily.

It localises to the cytoplasm. One of the essential components for the initiation of protein synthesis. Protects formylmethionyl-tRNA from spontaneous hydrolysis and promotes its binding to the 30S ribosomal subunits. Also involved in the hydrolysis of GTP during the formation of the 70S ribosomal complex. This Xanthomonas campestris pv. campestris (strain ATCC 33913 / DSM 3586 / NCPPB 528 / LMG 568 / P 25) protein is Translation initiation factor IF-2.